Here is a 223-residue protein sequence, read N- to C-terminus: UPF0758 protein HD_0732 (223 aa).

The 123-residue stretch at 98-220 folds into the MPN domain; that stretch reads TINTPHLAIM…YFSFEEERFH (123 aa). Residues His-169, His-171, and Asp-182 each coordinate Zn(2+). The JAMM motif signature appears at 169–182; that stretch reads HNHPSGNCTASQAD.

Belongs to the UPF0758 family.

The protein is UPF0758 protein HD_0732 of Haemophilus ducreyi (strain 35000HP / ATCC 700724).